Reading from the N-terminus, the 79-residue chain is Small ribosomal subunit protein bS18 (79 aa).

Belongs to the bacterial ribosomal protein bS18 family. As to quaternary structure, part of the 30S ribosomal subunit. Forms a tight heterodimer with protein bS6.

Its function is as follows. Binds as a heterodimer with protein bS6 to the central domain of the 16S rRNA, where it helps stabilize the platform of the 30S subunit. In Latilactobacillus sakei subsp. sakei (strain 23K) (Lactobacillus sakei subsp. sakei), this protein is Small ribosomal subunit protein bS18.